Here is a 338-residue protein sequence, read N- to C-terminus: S-adenosylmethionine:tRNA ribosyltransferase-isomerase (338 aa).

Belongs to the QueA family. As to quaternary structure, monomer.

Its subcellular location is the cytoplasm. The catalysed reaction is 7-aminomethyl-7-carbaguanosine(34) in tRNA + S-adenosyl-L-methionine = epoxyqueuosine(34) in tRNA + adenine + L-methionine + 2 H(+). Its pathway is tRNA modification; tRNA-queuosine biosynthesis. Transfers and isomerizes the ribose moiety from AdoMet to the 7-aminomethyl group of 7-deazaguanine (preQ1-tRNA) to give epoxyqueuosine (oQ-tRNA). This is S-adenosylmethionine:tRNA ribosyltransferase-isomerase from Francisella tularensis subsp. holarctica (strain FTNF002-00 / FTA).